We begin with the raw amino-acid sequence, 1255 residues long: TBC1 domain family member 1 (1255 aa).

Serine 146 is modified (phosphoserine). Residues 208 to 228 (RTDWEAPTGQPSAPGPRPMRK) are disordered. A Phosphoserine; by PKB/AKT1 modification is found at serine 229. At serine 231 the chain carries Phosphoserine; by AMPK. One can recognise a PID domain in the interval 238 to 398 (LAFRKEFQDA…LHKLCERIEG (161 aa)). Serine 489 carries the post-translational modification Phosphoserine; by PKB/AKT1. A Phosphoserine modification is found at serine 497. Position 499 is a phosphothreonine; by PKB/AKT1 (threonine 499). Phosphoserine occurs at positions 501, 519, 521, 559, 560, 564, 565, and 579. Disordered regions lie at residues 509 to 544 (GNKA…MGDK) and 559 to 581 (SSDD…LSPQ). Positions 519–539 (SASVDLDSSTSSTLSNTSKEL) are enriched in low complexity. Position 590 is a phosphothreonine (threonine 590). 2 disordered regions span residues 595 to 614 (PVEC…VSQR) and 621 to 681 (SVST…GNAV). Phosphoserine is present on serine 608. The residue at position 621 (serine 621) is a Phosphoserine; by PKB/AKT1. A phosphoserine mark is found at serine 660 and serine 661. Residues 670 to 679 (HNSSGEQSGN) show a composition bias toward polar residues. The residue at position 697 (serine 697) is a Phosphoserine; by PKB/AKT1. A phosphoserine mark is found at serine 698 and serine 699. Serine 700 bears the Phosphoserine; by AMPK mark. The tract at residues 764–786 (DSPSRYEDYSELGELPPRSPLEP) is disordered. Phosphoserine occurs at positions 782 and 1028. Residues 887 to 1081 (GVPRHHRGEI…RVFDMIFLQG (195 aa)) form the Rab-GAP TBC domain. Phosphotyrosine is present on tyrosine 1039. Threonine 1218 carries the phosphothreonine modification. The tract at residues 1233 to 1255 (LRRQSARPSTPEPDCTQLEPTGD) is disordered.

In terms of assembly, interacts with APPL2 (via BAR domain); interaction is dependent of TBC1D1 phosphorylation at Ser-229; interaction diminishes the phosphorylation of TBC1D1 at Thr-590, resulting in inhibition of SLC2A4/GLUT4 translocation and glucose uptake. Insulin-stimulated phosphorylation by AKT family kinases stimulates SLC2A4/GLUT4 translocation. In terms of tissue distribution, expressed in highest levels in hematopoietic cells, testis and kidney.

Its subcellular location is the nucleus. In terms of biological role, may act as a GTPase-activating protein for Rab family protein(s). May play a role in the cell cycle and differentiation of various tissues. Involved in the trafficking and translocation of GLUT4-containing vesicles and insulin-stimulated glucose uptake into cells. This chain is TBC1 domain family member 1 (Tbc1d1), found in Mus musculus (Mouse).